The following is a 210-amino-acid chain: Probable GTP-binding protein EngB (210 aa).

An EngB-type G domain is found at 27–201 (MGIEVAFAGR…HQKLDIWFSQ (175 aa)). Residues 35–42 (GRSNAGKS), 62–66 (GRTQL), 80–83 (DLPG), 147–150 (TKAD), and 180–182 (FSV) each bind GTP. Ser-42 and Thr-64 together coordinate Mg(2+).

The protein belongs to the TRAFAC class TrmE-Era-EngA-EngB-Septin-like GTPase superfamily. EngB GTPase family. Mg(2+) is required as a cofactor.

In terms of biological role, necessary for normal cell division and for the maintenance of normal septation. This is Probable GTP-binding protein EngB from Photorhabdus laumondii subsp. laumondii (strain DSM 15139 / CIP 105565 / TT01) (Photorhabdus luminescens subsp. laumondii).